The primary structure comprises 372 residues: Glutamate 5-kinase (372 aa).

ATP is bound at residue lysine 14. The substrate site is built by serine 54, aspartate 141, and asparagine 153. 173–174 is an ATP binding site; that stretch reads TD. The region spanning 280-358 is the PUA domain; that stretch reads RGRVVIDGGA…SEIESVLGHL (79 aa).

It belongs to the glutamate 5-kinase family.

The protein resides in the cytoplasm. The enzyme catalyses L-glutamate + ATP = L-glutamyl 5-phosphate + ADP. It functions in the pathway amino-acid biosynthesis; L-proline biosynthesis; L-glutamate 5-semialdehyde from L-glutamate: step 1/2. Catalyzes the transfer of a phosphate group to glutamate to form L-glutamate 5-phosphate. This Cupriavidus taiwanensis (strain DSM 17343 / BCRC 17206 / CCUG 44338 / CIP 107171 / LMG 19424 / R1) (Ralstonia taiwanensis (strain LMG 19424)) protein is Glutamate 5-kinase.